The following is a 583-amino-acid chain: 2-succinyl-5-enolpyruvyl-6-hydroxy-3-cyclohexene-1-carboxylate synthase (583 aa).

It belongs to the TPP enzyme family. MenD subfamily. As to quaternary structure, homodimer. Requires Mg(2+) as cofactor. It depends on Mn(2+) as a cofactor. Thiamine diphosphate serves as cofactor.

It carries out the reaction isochorismate + 2-oxoglutarate + H(+) = 5-enolpyruvoyl-6-hydroxy-2-succinyl-cyclohex-3-ene-1-carboxylate + CO2. It participates in quinol/quinone metabolism; 1,4-dihydroxy-2-naphthoate biosynthesis; 1,4-dihydroxy-2-naphthoate from chorismate: step 2/7. The protein operates within quinol/quinone metabolism; menaquinone biosynthesis. Its function is as follows. Catalyzes the thiamine diphosphate-dependent decarboxylation of 2-oxoglutarate and the subsequent addition of the resulting succinic semialdehyde-thiamine pyrophosphate anion to isochorismate to yield 2-succinyl-5-enolpyruvyl-6-hydroxy-3-cyclohexene-1-carboxylate (SEPHCHC). The polypeptide is 2-succinyl-5-enolpyruvyl-6-hydroxy-3-cyclohexene-1-carboxylate synthase (Chlorobium chlorochromatii (strain CaD3)).